The following is a 909-amino-acid chain: MAASVENRQFSHLEPGLSGVVRSFKPRSDSPVRGCNFPLNNELTNFQKKPNTTIYLDCSSSEDDDDDDDKNEYLQMIRKGKLEVEPSVHDIRDEGTADNWIERNNSMIRLTGKHPFNSEPPLARLMHHGFITPVPLHYVRNHGPVPKGMWDDWTVEVTGLVKRPMKFTMEQLVNEFPSRELPVTLVCAGNRRKEQNMVKQTIGFNWGAAAVSTTVWRGVPLRAILKRCGIYSRTKGALNICFEGADVLPGGGGSKYGTSIKKEFAMDPSRDIIIAYMQNGEKLTPDHGFPLRMIIPGFIGGRMVKWLKRIIVTTQESESYYHYKDNRVLPPHVDAELANAEAWWYKPEYIINELNINSVITTPCHEEILPINSWTTQRPYTLRGYSYSGGGKKVTRVEVTMDGGETWNVCTVDHPEKPNKYGKYWCWCFWSLEVEVLDLLSAKEIAVRAWDETLNTQPEKLIWNVMGMMNNCWFRVKTNVCKPHKGEIGIVFEHPTQPGNLSGGWMAKERHLEISAEAPPTLKKSISTPFMNTASKMYSMSEVKKHNSADSAWIIVHGHVYDATRFLKDHPGGIDSILINAGTDCTEEFDAIHSDKAKKLLEDFRIGELITTGYTSDSSPNNSVHGSSSFSGFLAPIKELAPAVRSVALIPREKIPCKLVDKKSISHDVRKFRFALPSEDQVLGLPVGKHIFLCAIIDDKLCMRAYTPTSTVDEVGYFELVVKIYFKGIVPKFPNGGQMSQYLDSLPLGAFVDVKGPLGHIEYQGRGNFLVHGKRKFAKKLAMLAGGTGITPVYQVMQAILKDPEDETEMHVVYANRTEDDILLKDELDSWAVKLPERVKVWYVVQDSIKEGWKYSTGFITEAVLREHIPLPSQTTLALACGPPPMIQFAVNPNLEKMGYDIKDSLLVF.

Residue Cys187 participates in Mo-molybdopterin binding. The region spanning 535–610 (SKMYSMSEVK…LEDFRIGELI (76 aa)) is the Cytochrome b5 heme-binding domain. Heme-binding residues include His570 and His593. An FAD-binding FR-type domain is found at 652–764 (REKIPCKLVD…KGPLGHIEYQ (113 aa)). FAD contacts are provided by residues 704-707 (RAYT), 721-725 (VVKIY), Phe726, Phe733, 738-740 (QMS), and Thr791.

Belongs to the nitrate reductase family. In terms of assembly, homodimer. FAD is required as a cofactor. The cofactor is heme. It depends on Mo-molybdopterin as a cofactor.

The catalysed reaction is nitrite + NAD(+) + H2O = nitrate + NADH + H(+). Its activity is regulated as follows. Regulated by the nitrogen source and controlled by the circadian rhythm. Functionally, nitrate reductase is a key enzyme involved in the first step of nitrate assimilation in plants, fungi and bacteria. This chain is Nitrate reductase [NADH] (NIA), found in Petunia hybrida (Petunia).